The sequence spans 276 residues: NAD-capped RNA hydrolase NudC (276 aa).

Residue Arg-82 participates in substrate binding. 2 residues coordinate Zn(2+): Cys-112 and Cys-115. Substrate is bound at residue Glu-125. The Zn(2+) site is built by Cys-130 and Cys-133. Tyr-138 provides a ligand contact to substrate. A Nudix hydrolase domain is found at 139–262 (PRISPSMIVL…SIARYLIDLY (124 aa)). A divalent metal cation is bound by residues Ala-172, Glu-188, and Glu-192. The Nudix box signature appears at 173-194 (GFAEPGESAEDCLIREVREEVS). Substrate is bound at residue 206 to 213 (QCWPFPHS). Glu-233 is a binding site for a divalent metal cation. Ala-255 is a binding site for substrate.

Belongs to the Nudix hydrolase family. NudC subfamily. As to quaternary structure, homodimer. Mg(2+) serves as cofactor. It depends on Mn(2+) as a cofactor. The cofactor is Zn(2+).

It catalyses the reaction a 5'-end NAD(+)-phospho-ribonucleoside in mRNA + H2O = a 5'-end phospho-adenosine-phospho-ribonucleoside in mRNA + beta-nicotinamide D-ribonucleotide + 2 H(+). The enzyme catalyses NAD(+) + H2O = beta-nicotinamide D-ribonucleotide + AMP + 2 H(+). The catalysed reaction is NADH + H2O = reduced beta-nicotinamide D-ribonucleotide + AMP + 2 H(+). In terms of biological role, mRNA decapping enzyme that specifically removes the nicotinamide adenine dinucleotide (NAD) cap from a subset of mRNAs by hydrolyzing the diphosphate linkage to produce nicotinamide mononucleotide (NMN) and 5' monophosphate mRNA. The NAD-cap is present at the 5'-end of some mRNAs and stabilizes RNA against 5'-processing. Has preference for mRNAs with a 5'-end purine. Catalyzes the hydrolysis of a broad range of dinucleotide pyrophosphates. The polypeptide is NAD-capped RNA hydrolase NudC (Pseudomonas fluorescens (strain ATCC BAA-477 / NRRL B-23932 / Pf-5)).